A 164-amino-acid chain; its full sequence is UPF0114 protein Sbal_0780 (164 aa).

The next 4 helical transmembrane spans lie at 15–35 (IMAP…VKFF), 53–73 (LVLL…IVMV), 109–129 (VAAS…MNAE), and 136–156 (IMWY…MGYL).

It belongs to the UPF0114 family.

It localises to the cell membrane. The sequence is that of UPF0114 protein Sbal_0780 from Shewanella baltica (strain OS155 / ATCC BAA-1091).